Reading from the N-terminus, the 1307-residue chain is Histone-lysine N-methyltransferase SETDB1 (1307 aa).

Positions 30 to 65 (VEELGISMEELRQYIDEELEKMDCIQQRKKQLAELE) form a coiled coil. 2 positions are modified to phosphoserine: serine 112 and serine 117. Threonine 120 bears the Phosphothreonine mark. A disordered region spans residues 127–148 (DEDDDVLSIDSGDAGSRTPKDQ). Lysine 182 participates in a covalent cross-link: Glycyl lysine isopeptide (Lys-Gly) (interchain with G-Cter in SUMO2); alternate. Lysine 182 is covalently cross-linked (Glycyl lysine isopeptide (Lys-Gly) (interchain with G-Cter in ubiquitin); alternate). Tudor domains follow at residues 257–320 (KLFV…LKKT) and 347–403 (LLKS…SMKT). 3 disordered regions span residues 404 to 424 (SSAS…PNMG), 444 to 512 (IQFK…TLSE), and 531 to 570 (SVTS…AFHG). Over residues 454 to 467 (PIAPPAPLPIPPLS) the composition is skewed to pro residues. Positions 476–494 (ESQLAQSRKQVAKKSTSFR) are enriched in polar residues. Low complexity predominate over residues 495–512 (PGSVGSGHSSPTSSTLSE). Residues 539–565 (AAPPVPPVPPGPPTPPGPPAPPGPLAP) are compositionally biased toward pro residues. Residues 611–682 (YRGKNPLLVP…EMFCLDPYVL (72 aa)) enclose the MBD domain. Residues 744–817 (VGCDCKDGCR…MCTNRLVQHG (74 aa)) form the Pre-SET domain. Residues cysteine 746, cysteine 748, cysteine 752, cysteine 758, cysteine 760, cysteine 798, cysteine 802, cysteine 804, and cysteine 809 each contribute to the Zn(2+) site. An SET domain is found at 820–1282 (VRLQLFKTQN…AGTELTWDYN (463 aa)). S-adenosyl-L-methionine is bound by residues 830–832 (KGW), aspartate 868, and tyrosine 870. Residue lysine 884 forms a Glycyl lysine isopeptide (Lys-Gly) (interchain with G-Cter in ubiquitin) linkage. The disordered stretch occupies residues 885–1174 (EGYESDVPTS…KNLSGPTKRQ (290 aa)). The span at 913–924 (EDPEESNDDSSD) shows a compositional bias: acidic residues. The segment covering 950–966 (GQKENELSEMTSKDSRP) has biased composition (basic and acidic residues). At serine 1042 the chain carries Phosphoserine. Residues 1048-1066 (FKDEGDNKQPKKEDPENRN) are compositionally biased toward basic and acidic residues. Lysine 1049 is covalently cross-linked (Glycyl lysine isopeptide (Lys-Gly) (interchain with G-Cter in SUMO2); alternate). Lysine 1049 participates in a covalent cross-link: Glycyl lysine isopeptide (Lys-Gly) (interchain with G-Cter in SUMO1); alternate. Residues lysine 1055 and lysine 1085 each participate in a glycyl lysine isopeptide (Lys-Gly) (interchain with G-Cter in SUMO2) cross-link. Residues 1097 to 1112 (SVLQSQRVVTSTQSNP) show a composition bias toward polar residues. The segment covering 1116-1131 (LTLSSSTESEGESGTS) has biased composition (low complexity). Polar residues predominate over residues 1137 to 1156 (GHTSATAVDSDDIQTISSGS). Lysine 1165 participates in a covalent cross-link: Glycyl lysine isopeptide (Lys-Gly) (interchain with G-Cter in SUMO2). An N6,N6,N6-trimethyllysine; alternate mark is found at lysine 1186 and lysine 1194. N6,N6-dimethyllysine; alternate occurs at positions 1186 and 1194. Residues arginine 1236 and 1239–1240 (NH) contribute to the S-adenosyl-L-methionine site. Positions 1242, 1295, 1297, and 1302 each coordinate Zn(2+). One can recognise a Post-SET domain in the interval 1291–1307 (KELLCCCGAIECRGRLL).

It belongs to the class V-like SAM-binding methyltransferase superfamily. Histone-lysine methyltransferase family. Suvar3-9 subfamily. As to quaternary structure, part of a complex containing at least CDYL, REST, WIZ, SETDB1, EHMT1 and EHMT2. Forms a complex with ATRX, TRIM28 and ZNF274. Probably part of a corepressor complex containing ZNF304, TRIM28, SETDB1 and DNMT1. Interacts with TRIM28/TIF1B. Interacts with ATF7IP and ATF7IP2; the interaction with ATF7IP is required to stimulate histone methyltransferase activity and facilitate the conversion of dimethylated to trimethylated H3 'Lys-9'. Interacts with MBD1; interaction is abolished when MBD1 is sumoylated. Interacts with CBX1 and CBX5. Interacts with DNMT3A and DNMT3B. Interacts with SUMO2. Interacts with MPHOSPH8. Interacts with ERG. Interacts with HDAC1, HDAC2, SIN3A, SIN3B. Interacts with ATRX. Interacts with RESF1. Interacts with ZNF638. Interacts with TASOR. Interacts with ZNF263; recruited to the SIX3 promoter along with other proteins involved in chromatin modification and transcriptional corepression where it contributes to transcriptional repression. Interacts with PHF13; the interaction probably enhances SETDB1 chromatin-associated levels and activity. Interacts with VRK1. Degraded by the proteasome, shielded by interaction with ATF7IP. In terms of processing, monoubiquitinated at Lys-884 by E2 enzymes UBE2E family. The conjugated-Ub is protected from deubiquitination through the SET domain. Monoubiquitination at Lys-884 is required for catalytic activity and H3K9 methylation and endogenous retrovirus silencing. As to expression, ubiquitously expressed. Strong expression in liver and testis. Expressed in the brain, lungs, kidneys, uterus and seminal vesicles.

The protein localises to the nucleus. It is found in the chromosome. The catalysed reaction is N(6),N(6)-dimethyl-L-lysyl(9)-[histone H3] + S-adenosyl-L-methionine = N(6),N(6),N(6)-trimethyl-L-lysyl(9)-[histone H3] + S-adenosyl-L-homocysteine + H(+). In terms of biological role, histone methyltransferase that specifically trimethylates 'Lys-9' of histone H3. H3 'Lys-9' trimethylation represents a specific tag for epigenetic transcriptional repression by recruiting HP1 (CBX1, CBX3 and/or CBX5) proteins to methylated histones. Mainly functions in euchromatin regions, thereby playing a central role in the silencing of euchromatic genes. H3 'Lys-9' trimethylation is coordinated with DNA methylation. Probably forms a complex with MBD1 and ATF7IP that represses transcription and couples DNA methylation and histone 'Lys-9' trimethylation. Its activity is dependent on MBD1 and is heritably maintained through DNA replication by being recruited by CAF-1. SETDB1 is targeted to histone H3 by TRIM28/TIF1B, a factor recruited by KRAB zinc-finger proteins. Probably forms a corepressor complex required for activated KRAS-mediated promoter hypermethylation and transcriptional silencing of tumor suppressor genes (TSGs) or other tumor-related genes in colorectal cancer (CRC) cells. Required to maintain a transcriptionally repressive state of genes in undifferentiated embryonic stem cells (ESCs). In ESCs, in collaboration with TRIM28, is also required for H3K9me3 and silencing of endogenous and introduced retroviruses in a DNA-methylation independent-pathway. Associates at promoter regions of tumor suppressor genes (TSGs) leading to their gene silencing. The SETDB1-TRIM28-ZNF274 complex may play a role in recruiting ATRX to the 3'-exons of zinc-finger coding genes with atypical chromatin signatures to establish or maintain/protect H3K9me3 at these transcriptionally active regions. The chain is Histone-lysine N-methyltransferase SETDB1 from Mus musculus (Mouse).